Reading from the N-terminus, the 840-residue chain is MAEKEEAIFRSAEMALVQFYIPQEISRDSAYTLGQLGLVQFRDLNSKVRAFQRTFVNEIRRLDNVERQYRYFYSLLKKHDIKLYEGDTDKYLDGSGELYVPPSGSVIDDYVRNASYLEERLIQMEDATDQIEVQKNDLEQYRFILQSGDEFFLKGDNTDSTSYMDEDMIDANGENIAAAIGASVNYVTGVIARDKVATLEQILWRVLRGNLFFKTVEIEQPVYDVKTREYKHKNAFIVFSHGDLIIKRIRKIAESLDANLYDVDSSNEGRSQQLAKVNKNLSDLYTVLKTTSTTLESELYAIAKELDSWFQDVTREKAIFEILNKSNYDTNRKILIAEGWIPRDELATLQARLGEMIARLGIDVPSIIQVLDTNHTPPTFHRTNKFTAGFQSICDCYGIAQYREINAGLPTIVTFPFMFAIMFGDMGHGFLMTLAALSLVLNEKKINKMKRGEIFDMAFTGRYIILLMGVFSMYTGFLYNDIFSKTMTIFKSGWKWPDHWKKGESITATSVGTYPIGLDWAWHGTENALLFSNSYKMKLSILMGFIHMTYSYFFSLANHLYFNSMIDIIGNFIPGLLFMQGIFGYLSVCIVYKWAVDWVKDGKPAPGLLNMLINMFLSPGTIDDELYPHQAKVQVFLLLMALVCIPWLLLVKPLHFKFTHKKKSHEPLPSTEADASSEDLEAQQLISAMDADDAEEEEVGSGSHGEDFGDIMIHQVIHTIEFCLNCVSHTASYLRLWALSLAHAQLSSVLWTMTIQIAFGFRGFVGVFMTVALFAMWFALTCAVLVLMEGTSAMLHSLRLHWVESMSKFFVGEGLPYEPFAFEYKDMEVAVASASSSASS.

An N-acetylalanine modification is found at Ala-2. Residues Ala-2–Glu-404 lie on the Cytoplasmic side of the membrane. The stretch at Leu-117 to Leu-145 forms a coiled coil. The chain crosses the membrane as a helical span at residues Ile-405–Phe-423. At Gly-424–Asp-425 the chain is on the vacuolar side. Residues Met-426–Asn-442 form a helical membrane-spanning segment. The Cytoplasmic segment spans residues Glu-443–Asp-456. A helical transmembrane segment spans residues Met-457–Thr-486. The Vacuolar portion of the chain corresponds to Met-487–Ser-534. Residues Tyr-535 to Phe-554 traverse the membrane as a helical segment. Over Ser-555–Phe-572 the chain is Cytoplasmic. Residues Ile-573–Lys-593 traverse the membrane as a helical segment. Residues Trp-594–Phe-636 lie on the Vacuolar side of the membrane. The chain crosses the membrane as a helical span at residues Leu-637–Phe-656. Topologically, residues Lys-657–Thr-719 are cytoplasmic. A helical transmembrane segment spans residues Ile-720–Ala-744. At Gln-745–Val-765 the chain is on the vacuolar side. A helical transmembrane segment spans residues Gly-766 to Glu-804. Over Ser-805–Ser-840 the chain is Cytoplasmic.

The protein belongs to the V-ATPase 116 kDa subunit family. In terms of assembly, V-ATPase is a heteromultimeric enzyme composed of a peripheral catalytic V1 complex (components A to H) attached to an integral membrane V0 proton pore complex (components: a, c, c', c'', d, e, f and VOA1). In terms of processing, glycosylated.

It localises to the vacuole membrane. Functionally, subunit of the V0 complex of vacuolar(H+)-ATPase (V-ATPase), a multisubunit enzyme composed of a peripheral complex (V1) that hydrolyzes ATP and a membrane integral complex (V0) that translocates protons. V-ATPase is responsible for acidifying and maintaining the pH of intracellular compartments. Is present only in vacuolar V-ATPase complexes; enzymes containing this subunit have a 4-fold higher ratio of proton transport to ATP hydrolysis than complexes containing the Golgi/endosomal isoform and undergo reversible dissociation of V1 and V0 in response to glucose depletion. This is V-type proton ATPase subunit a, vacuolar isoform from Saccharomyces cerevisiae (strain ATCC 204508 / S288c) (Baker's yeast).